Here is a 150-residue protein sequence, read N- to C-terminus: L-alanine exporter AlaE (150 aa).

Transmembrane regions (helical) follow at residues phenylalanine 17–methionine 37, leucine 48–leucine 68, leucine 86–alanine 106, and isoleucine 111–tyrosine 131.

It belongs to the AlaE exporter family.

It is found in the cell inner membrane. Exports L-alanine. In Aliivibrio fischeri (strain ATCC 700601 / ES114) (Vibrio fischeri), this protein is L-alanine exporter AlaE.